The following is a 52-amino-acid chain: Conotoxin Cal9.2d (52 aa).

Positions 1–6 (KRGVTL) are excised as a propeptide. 3 disulfide bridges follow: C14–C31, C19–C41, and C21–C46.

In terms of tissue distribution, expressed by the venom duct.

It is found in the secreted. In terms of biological role, probable neurotoxin with unknown target. Possibly targets ion channels. The protein is Conotoxin Cal9.2d of Californiconus californicus (California cone).